Reading from the N-terminus, the 571-residue chain is MRRAAMYEEGPPPSYESVVSAAPVAAALGSPFDAPLDPPFVPPRYLRPTGGRNSIRYSELAPLFDTTRVYLVDNKSTDVASLNYQNDHSNFLTTVIQNNDYSPGEASTQTINLDDRSHWGGDLKTILHTNMPNVNEFMFTNKFKARVMVSRLPTKDNQVELKYEWVEFTLPEGNYSETMTIDLMNNAIVEHYLKVGRQNGVLESDIGVKFDTRNFRLGFDPVTGLVMPGVYTNEAFHPDIILLPGCGVDFTHSRLSNLLGIRKRQPFQEGFRITYDDLEGGNIPALLDVDAYQASLKDDTEQGGGGAGGSNSSGSGAEENSNAAAAAMQPVEDMNDHAIRGDTFATRAEEKRAEAEAAAEAAAPAAQPEVEKPQKKPVIKPLTEDSKKRSYNLISNDSTFTQYRSWYLAYNYGDPQTGIRSWTLLCTPDVTCGSEQVYWSLPDMMQDPVTFRSTRQISNFPVVGAELLPVHSKSFYNDQAVYSQLIRQFTSLTHVFNRFPENQILARPPAPTITTVSENVPALTDHGTLPLRNSIGGVQRVTITDARRRTCPYVYKALGIVSPRVLSSRTF.

The segment at 297-325 is disordered; sequence KDDTEQGGGGAGGSNSSGSGAEENSNAAA. The segment covering 302–311 has biased composition (gly residues); that stretch reads QGGGGAGGSN. Positions 312 to 325 are enriched in low complexity; sequence SSGSGAEENSNAAA. The short motif at 340–342 is the Cell attachment site element; sequence RGD. The tract at residues 347–383 is disordered; the sequence is RAEEKRAEAEAAAEAAAPAAQPEVEKPQKKPVIKPLT. Residues 356–368 show a composition bias toward low complexity; it reads EAAAEAAAPAAQP.

The protein belongs to the adenoviridae penton family. In terms of assembly, interacts (via the cell attachment site RGD) with host heterodimer ITGAV-ITGB5; this interaction promotes virus internalization. Interacts with host WWP1 and WWP2. Interacts with the fiber protein (via N-terminal tail region). Interacts with the capsid vertex protein; this interaction binds the penton base to neighboring peripentonal hexons.

It is found in the virion. The protein resides in the host nucleus. Major capsid protein that self-associates to form penton base pentamers, each in the shape of a pentagon, situated at the 12 vertices of the pseudo T=25 capsid. Involved in virus secondary attachment to host cell after initial attachment by the fiber protein. Binds host integrin heterodimer ITGAV-ITGB5 (alphaV-beta5) thereby triggering clathrin-mediated endocytosis of virions. Mediates initial virus attachment to CXADR-negative cells. Binding to integrins ITGAV-ITGB5 also seems to induce macropinocytosis uptake of the virus. As the virus enters the host cell, penton proteins are shed concomitant with virion acidification in the endosome. The chain is Penton protein from Homo sapiens (Human).